Here is a 256-residue protein sequence, read N- to C-terminus: MKTLIVDDEPLARNELHYLLNEISGFNVIDEAENIEETLEKLLSETYDLVFLDINLMDESGIDLAQKIKKMKQPPHIIFATAHDTFAVKAFELDAIDYILKPFELERIEQAVNKVKHQISNSNEIDHITSEPSTLSMQQDDRQENEDQTVLPIEMNERIYVIRKDDITAVSVNNGITTINTTHRTYQTNEPLNYYEKKLSNNTFIKIHRATIINKTHIDSVEHWFNYTYQVTMTSGDKFQVSRSFMKAFKHEIGLA.

Residues 2–116 (KTLIVDDEPL…RIEQAVNKVK (115 aa)) enclose the Response regulatory domain. At Asp53 the chain carries 4-aspartylphosphate. The disordered stretch occupies residues 124–146 (EIDHITSEPSTLSMQQDDRQENE). The 105-residue stretch at 151 to 255 (LPIEMNERIY…MKAFKHEIGL (105 aa)) folds into the HTH LytTR-type domain.

Post-translationally, phosphorylated by LytS.

The protein localises to the cytoplasm. Its function is as follows. Member of the two-component regulatory system LytR/LytS that probably regulates genes involved in cell wall metabolism. This chain is Sensory transduction protein LytR (lytR), found in Staphylococcus haemolyticus (strain JCSC1435).